Reading from the N-terminus, the 194-residue chain is Imidazoleglycerol-phosphate dehydratase (194 aa).

It belongs to the imidazoleglycerol-phosphate dehydratase family.

The protein localises to the cytoplasm. It catalyses the reaction D-erythro-1-(imidazol-4-yl)glycerol 3-phosphate = 3-(imidazol-4-yl)-2-oxopropyl phosphate + H2O. It participates in amino-acid biosynthesis; L-histidine biosynthesis; L-histidine from 5-phospho-alpha-D-ribose 1-diphosphate: step 6/9. This chain is Imidazoleglycerol-phosphate dehydratase, found in Thermoanaerobacter pseudethanolicus (strain ATCC 33223 / 39E) (Clostridium thermohydrosulfuricum).